Consider the following 252-residue polypeptide: Small ribosomal subunit protein uS3 (252 aa).

Positions 39-109 (IRNYVQTRLK…EVKIDVVEVV (71 aa)) constitute a KH type-2 domain. Basic and acidic residues predominate over residues 221–241 (EMKRIKERRSDSGPRSRNDRS). A disordered region spans residues 221 to 252 (EMKRIKERRSDSGPRSRNDRSQKRRRRPNDRG). The segment covering 242–252 (QKRRRRPNDRG) has biased composition (basic residues).

It belongs to the universal ribosomal protein uS3 family. Part of the 30S ribosomal subunit. Forms a tight complex with proteins S10 and S14.

Its function is as follows. Binds the lower part of the 30S subunit head. Binds mRNA in the 70S ribosome, positioning it for translation. This is Small ribosomal subunit protein uS3 from Chlorobium luteolum (strain DSM 273 / BCRC 81028 / 2530) (Pelodictyon luteolum).